The primary structure comprises 132 residues: Major pollen allergen Art v 1 (132 aa).

The first 24 residues, 1 to 24, serve as a signal peptide directing secretion; sequence MAKCSYVFCAVLLIFIVAIGEMEA. A defensin-like domain region spans residues 28–77; sequence KLCEKTSKTYSGKCDNKKCDKKCIEWEKAQHGACHKREAGKESCFCYFDC. Disulfide bonds link Cys-30–Cys-77, Cys-41–Cys-61, Cys-46–Cys-71, and Cys-50–Cys-73. 2 epitope recognized by IgE antibodies of mugwort pollen-sensitized patients regions span residues 64 to 70 and 79 to 87; these read REAGKES and KSPPGATPA. The tract at residues 81–132 is disordered; that stretch reads PPGATPAPPGAAPPPAAGGSPSPPADGGSPPPPADGGSPPVDGGSPPPPSTH. Positions 83–114 are enriched in pro residues; it reads GATPAPPGAAPPPAAGGSPSPPADGGSPPPPA. A compositionally biased stretch (low complexity) spans 115–124; the sequence is DGGSPPVDGG.

The protein in the N-terminal section; belongs to the DEFL family. The mature protein extracted from the plant exhibits an average rate of 76% of hydroxyprolines. In terms of processing, O-glycosylated. O-linkage of 3 galactoses plus 9-16 or 21-23 arabinose residues attached on one or two hydroxyprolines.

The protein resides in the secreted. In Artemisia vulgaris (Mugwort), this protein is Major pollen allergen Art v 1.